The primary structure comprises 224 residues: UPF0758 protein LCA_0852 (224 aa).

The region spanning 100–222 (VVASSQMVGQ…YLSLREEGYL (123 aa)) is the MPN domain. Histidine 171, histidine 173, and aspartate 184 together coordinate Zn(2+). The short motif at 171–184 (HNHPSGQLAPSTQD) is the JAMM motif element.

It belongs to the UPF0758 family.

In Latilactobacillus sakei subsp. sakei (strain 23K) (Lactobacillus sakei subsp. sakei), this protein is UPF0758 protein LCA_0852.